The following is a 407-amino-acid chain: [Pyruvate dehydrogenase (acetyl-transferring)] kinase isozyme 2, mitochondrial (407 aa).

Positions 135-364 (LEYKDTYGDD…DAVIYLKALS (230 aa)) constitute a Histidine kinase domain. Phosphotyrosine occurs at positions 215 and 216. Residues 251–258 (ELFKNAMR), D290, 309–310 (ST), and 325–330 (GFGYGL) each bind ATP. Residue K376 is modified to N6-succinyllysine.

This sequence belongs to the PDK/BCKDK protein kinase family. As to quaternary structure, homodimer, and heterodimer with PDK1. Interacts with the pyruvate dehydrogenase complex subunit DLAT, and is part of the multimeric pyruvate dehydrogenase complex that contains multiple copies of pyruvate dehydrogenase (E1), dihydrolipoamide acetyltransferase (DLAT, E2) and lipoamide dehydrogenase (DLD, E3). Detected in heart (at protein level). Highest level of expression in heart and skeletal muscle and the lowest in spleen and lung. Liver, kidney, brain and testis levels are intermediate.

The protein resides in the mitochondrion matrix. The enzyme catalyses L-seryl-[pyruvate dehydrogenase E1 alpha subunit] + ATP = O-phospho-L-seryl-[pyruvate dehydrogenase E1 alpha subunit] + ADP + H(+). With respect to regulation, activity increases in response to increased acetyl-CoA and NADH levels and upon binding to the pyruvate dehydrogenase subunit DLAT. Inhibited by ADP and pyruvate; these compounds interfere with DLAT binding and thereby inhibit kinase activity. Inhibited by dichloroacetate. Inhibited by AZD7545; this compound interferes with DLAT binding and thereby inhibits kinase activity. Reactive oxygen species cause the formation of disulfide bonds, and thereby inhibit the enzyme. Kinase that plays a key role in the regulation of glucose and fatty acid metabolism and homeostasis via phosphorylation of the pyruvate dehydrogenase subunits PDHA1 and PDHA2. This inhibits pyruvate dehydrogenase activity, and thereby regulates metabolite flux through the tricarboxylic acid cycle, down-regulates aerobic respiration and inhibits the formation of acetyl-coenzyme A from pyruvate. Inhibition of pyruvate dehydrogenase decreases glucose utilization and increases fat metabolism. Mediates cellular responses to insulin. Plays an important role in maintaining normal blood glucose levels and in metabolic adaptation to nutrient availability. Via its regulation of pyruvate dehydrogenase activity, plays an important role in maintaining normal blood pH and in preventing the accumulation of ketone bodies under starvation. Plays a role in the regulation of cell proliferation and in resistance to apoptosis under oxidative stress. Plays a role in p53/TP53-mediated apoptosis. The protein is [Pyruvate dehydrogenase (acetyl-transferring)] kinase isozyme 2, mitochondrial (Pdk2) of Rattus norvegicus (Rat).